The following is a 150-amino-acid chain: UPF0756 membrane protein STH2648 (150 aa).

Helical transmembrane passes span 13–33, 52–72, 85–105, and 111–131; these read ALGVVARNALIVTAAGVVLIL, AGLIFLLIAVLVPFATGEVGW, LAAILGGIIAAVLSGYGVTLL, and VIVGMVVGTILGVVLFKGIPV.

This sequence belongs to the UPF0756 family.

It is found in the cell membrane. The protein is UPF0756 membrane protein STH2648 of Symbiobacterium thermophilum (strain DSM 24528 / JCM 14929 / IAM 14863 / T).